A 315-amino-acid chain; its full sequence is Vomeronasal type-1 receptor 54 (315 aa).

Residues 1 to 15 (MNKMNRLSHNTEIRN) are Extracellular-facing. The chain crosses the membrane as a helical span at residues 16 to 40 (AIYSGVGIGISGNSFLLLFHIFKYI). Over 41 to 51 (RGQRSRHIDLP) the chain is Cytoplasmic. Residues 52 to 71 (IGLLSLIHLVMLIAMSLVAT) form a helical membrane-spanning segment. The Extracellular segment spans residues 72–90 (DIFMPWGRWGDTTCKCVIS). A disulfide bridge connects residues C85 and C172. Residues 91–112 (LYRFCRSLSLCATSLLSILQAV) traverse the membrane as a helical segment. The Cytoplasmic segment spans residues 113-132 (TLNPRNSCLEKFKRKSPHYM). The chain crosses the membrane as a helical span at residues 133–154 (LGCLLFLSVFYTFISSPLATYI). The Extracellular segment spans residues 155–193 (TAKSNLTSPSFTYITTSCSLAPMSYSFHLTVFILLTSRD). Residues 194–212 (VIFVGLMLLSSGYMVTFLG) traverse the membrane as a helical segment. Residues 213–239 (RHKKQSQFLHITSFSLKPSAEKRAMRT) lie on the Cytoplasmic side of the membrane. A helical membrane pass occupies residues 240–260 (ILCLMSFFVLMYTLDSIVSYI). Residues 261-267 (RSIDDGQ) are Extracellular-facing. The helical transmembrane segment at 268 to 288 (IFYCVHIFTAHGYATVSPFLI) threads the bilayer. The Cytoplasmic portion of the chain corresponds to 289-315 (LSTEKYIINIFRSTFGRMVTIILLRNR).

The protein belongs to the G-protein coupled receptor 1 family.

It is found in the cell membrane. Putative pheromone receptor implicated in the regulation of social and reproductive behavior. The protein is Vomeronasal type-1 receptor 54 (Vmn1r54) of Mus musculus (Mouse).